The following is a 444-amino-acid chain: Tol-Pal system protein TolB (444 aa).

Positions Met-1–Ala-19 are cleaved as a signal peptide.

It belongs to the TolB family. As to quaternary structure, the Tol-Pal system is composed of five core proteins: the inner membrane proteins TolA, TolQ and TolR, the periplasmic protein TolB and the outer membrane protein Pal. They form a network linking the inner and outer membranes and the peptidoglycan layer.

It localises to the periplasm. Functionally, part of the Tol-Pal system, which plays a role in outer membrane invagination during cell division and is important for maintaining outer membrane integrity. This is Tol-Pal system protein TolB from Rickettsia conorii (strain ATCC VR-613 / Malish 7).